The sequence spans 249 residues: 5'-nucleotidase SurE (249 aa).

A divalent metal cation-binding residues include D8, D9, S39, and N91.

It belongs to the SurE nucleotidase family. A divalent metal cation is required as a cofactor.

It is found in the cytoplasm. The catalysed reaction is a ribonucleoside 5'-phosphate + H2O = a ribonucleoside + phosphate. In terms of biological role, nucleotidase that shows phosphatase activity on nucleoside 5'-monophosphates. The protein is 5'-nucleotidase SurE of Haemophilus influenzae (strain PittGG).